An 86-amino-acid polypeptide reads, in one-letter code: Small nuclear ribonucleoprotein F (86 aa).

Positions 14–86 (NPKPFLKGLV…NVLYIRELPN (73 aa)) constitute a Sm domain.

It belongs to the snRNP Sm proteins family. SmF/LSm6 subfamily. Component of the Sm core complex, present in spliceosomal snRNP U1, U2, U4/U6 and U5. The core complex contains SMB1, SMD1, SMD2, SMD3, SME1, SMX3 and SMX2 (Sm proteins B, D1, D2, D3, E, F and G, respectively), and is probably a heptameric ring structure. SMX3 specifically interacts with SME1. Belongs to the CWC complex (or CEF1-associated complex), a spliceosome sub-complex reminiscent of a late-stage spliceosome composed of the U2, U5 and U6 snRNAs and at least BUD13, BUD31, BRR2, CDC40, CEF1, CLF1, CUS1, CWC2, CWC15, CWC21, CWC22, CWC23, CWC24, CWC25, CWC27, ECM2, HSH155, IST3, ISY1, LEA1, MSL1, NTC20, PRP8, PRP9, PRP11, PRP19, PRP21, PRP22, PRP45, PRP46, SLU7, SMB1, SMD1, SMD2, SMD3, SMX2, SMX3, SNT309, SNU114, SPP2, SYF1, SYF2, RSE1 and YJU2. Component of the U4/U6-U5 tri-snRNP complex composed of the U4, U6 and U5 snRNAs and at least PRP3, PRP4, PRP6, PRP8, PRP18, PRP31, PRP38, SNU13, SNU23, SNU66, SNU114, SPP381, SMB1, SMD1, SMD2, SMD3, SMX2, SMX3, LSM2, LSM3, LSM4, LSM5, LSM6, LSM7, LSM8, BRR2 and DIB1.

The protein localises to the nucleus. It is found in the cytoplasm. Plays a role in pre-mRNA splicing as a core component of the spliceosomal U1, U2, U4 and U5 small nuclear ribonucleoproteins (snRNPs), the building blocks of the spliceosome. In Saccharomyces cerevisiae (strain ATCC 204508 / S288c) (Baker's yeast), this protein is Small nuclear ribonucleoprotein F (SMX3).